The sequence spans 522 residues: MALLPRALSAGAGPSWRRAARAFRGFLLLLPEPAALTRALSRAMACRQEPQPQGPPPAAGAVASYDYLVIGGGSGGLASARRAAELGARAAVVESHKLGGTCVNVGCVPKKVMWNTAVHSEFMHDHADYGFPSCEGKFNWRVIKEKRDAYVSRLNAIYQNNLTKSHIEIIRGHAAFTSDPKPTIEVSGKKYTAPHILIATGGMPSTPHESQIPGASLGITSDGFFQLEELPGRSVIVGAGYIAVEMAGILSALGSKTSLMIRHDKVLRSFDSMISTNCTEELENAGVEVLKFSQVKEVKKTLSGLEVSMVTAVPGRLPVMTMIPDVDCLLWAIGRVPNTKDLSLNKLGIQTDDKGHIIVDEFQNTNVKGIYAVGDVCGKALLTPVAIAAGRKLAHRLFEYKEDSKLDYNNIPTVVFSHPPIGTVGLTEDEAIHKYGIENVKTYSTSFTPMYHAVTKRKTKCVMKMVCANKEEKVVGIHMQGLGCDEMLQGFAVAVKMGATKADFDNTVAIHPTSSEELVTLR.

Residues M1–A43 constitute a mitochondrion transit peptide. Positions 74 and 75 each coordinate FAD. S74 serves as a coordination point for glutathione. Position 81 (R81) interacts with glutathione. E94 is an FAD binding site. Position 97 is an N6-acetyllysine (K97). FAD contacts are provided by T101, C102, and K110. C102 and C107 are joined by a disulfide. Y158 is a binding site for glutathione. A174 contacts FAD. 6 residues coordinate NADP(+): A239, I242, E245, R262, R268, and G334. D375 serves as a coordination point for FAD. L381 provides a ligand contact to NADP(+). T383 is an FAD binding site. Glutathione is bound at residue R391. An NADP(+)-binding site is contributed by V414. H511 serves as a coordination point for FAD. Residue H511 is the Proton acceptor of the active site.

This sequence belongs to the class-I pyridine nucleotide-disulfide oxidoreductase family. In terms of assembly, homodimer; disulfide-linked. FAD serves as cofactor.

It is found in the mitochondrion. It localises to the cytoplasm. The enzyme catalyses 2 glutathione + NADP(+) = glutathione disulfide + NADPH + H(+). Catalyzes the reduction of glutathione disulfide (GSSG) to reduced glutathione (GSH). Constitutes the major mechanism to maintain a high GSH:GSSG ratio in the cytosol. This chain is Glutathione reductase, mitochondrial (GSR), found in Homo sapiens (Human).